Here is a 182-residue protein sequence, read N- to C-terminus: Ribosome-recycling factor (182 aa).

The protein belongs to the RRF family.

It localises to the cytoplasm. Its function is as follows. Responsible for the release of ribosomes from messenger RNA at the termination of protein biosynthesis. May increase the efficiency of translation by recycling ribosomes from one round of translation to another. This is Ribosome-recycling factor from Thermosynechococcus vestitus (strain NIES-2133 / IAM M-273 / BP-1).